We begin with the raw amino-acid sequence, 401 residues long: Calreticulin (401 aa).

The signal sequence occupies residues 1–18; the sequence is MRKELWLGLLLSSQAVLS. Cys-103 and Cys-134 are oxidised to a cystine. An alpha-D-glucoside contacts are provided by Tyr-107, Lys-109, Tyr-125, and Asp-132. A run of 7 repeats spans residues 187-198, 206-217, 223-234, 241-252, 256-266, 270-280, and 284-294. A 4 X approximate repeats region spans residues 187 to 252; that stretch reads KESGTLEEDW…DATQPDDWDE (66 aa). Composition is skewed to basic and acidic residues over residues 199–214 and 224–236; these read LKPK…KPAD and PEDK…DKEP. The tract at residues 199-263 is disordered; that stretch reads LKPKTIPDPE…EDGKWEAPMI (65 aa). Residues 246 to 256 show a composition bias toward acidic residues; that stretch reads QPDDWDEEEDG. Positions 256 to 294 are 3 X approximate repeats; it reads GKWEAPMISNPKYKGEWKAKKIPNPAYKGVWKPRDIPNP. An an alpha-D-glucoside-binding site is contributed by Asp-314. The interval 341-401 is disordered; the sequence is DQTNGATKDA…EEEDDKKDEL (61 aa). A compositionally biased stretch (basic and acidic residues) spans 348–381; it reads KDAEKKAFDSAEADKRKKEEDERKKQEEEEKKTA. Over residues 382-401 the composition is skewed to acidic residues; the sequence is EEDEDDDDEEEEEDDKKDEL. The short motif at 398 to 401 is the Prevents secretion from ER element; the sequence is KDEL.

The protein belongs to the calreticulin family.

The protein localises to the endoplasmic reticulum lumen. Molecular calcium-binding chaperone promoting folding, oligomeric assembly and quality control in the ER via the calreticulin/calnexin cycle. This lectin may interact transiently with almost all of the monoglucosylated glycoproteins that are synthesized in the ER. The sequence is that of Calreticulin from Euglena gracilis.